A 338-amino-acid chain; its full sequence is Glycerol-3-phosphate dehydrogenase [NAD(P)+] (338 aa).

3 residues coordinate NADPH: Ser-12, Trp-13, and Lys-110. The sn-glycerol 3-phosphate site is built by Lys-110, Gly-141, and Ser-143. Ala-145 provides a ligand contact to NADPH. Sn-glycerol 3-phosphate-binding residues include Lys-196, Asp-249, Ser-259, Arg-260, and Asn-261. Residue Lys-196 is the Proton acceptor of the active site. Arg-260 provides a ligand contact to NADPH. 2 residues coordinate NADPH: Val-284 and Glu-286.

It belongs to the NAD-dependent glycerol-3-phosphate dehydrogenase family.

It is found in the cytoplasm. The catalysed reaction is sn-glycerol 3-phosphate + NAD(+) = dihydroxyacetone phosphate + NADH + H(+). It carries out the reaction sn-glycerol 3-phosphate + NADP(+) = dihydroxyacetone phosphate + NADPH + H(+). Its pathway is membrane lipid metabolism; glycerophospholipid metabolism. In terms of biological role, catalyzes the reduction of the glycolytic intermediate dihydroxyacetone phosphate (DHAP) to sn-glycerol 3-phosphate (G3P), the key precursor for phospholipid synthesis. The protein is Glycerol-3-phosphate dehydrogenase [NAD(P)+] of Pediococcus pentosaceus (strain ATCC 25745 / CCUG 21536 / LMG 10740 / 183-1w).